Reading from the N-terminus, the 368-residue chain is Core-capsid bridging protein (368 aa).

Disordered regions lie at residues 17–49 (EIYGPPKKEEQDYKPRKLKRVKKKKKDDDDELD) and 307–340 (GYRGYTYRPRRRATTRRRTTTGTRRRRRRRQPVL). The segment covering 22 to 31 (PKKEEQDYKP) has biased composition (basic and acidic residues). 2 stretches are compositionally biased toward basic residues: residues 32 to 41 (RKLKRVKKKK) and 314 to 337 (RPRRRATTRRRTTTGTRRRRRRRQ).

The protein belongs to the adenoviridae core-capsid bridging protein family. In terms of assembly, monomer. Homodimer. Exists in equilibrium between monomers and dimers in solution. Interacts with the histone-like nucleoprotein; this interactions bridge the virus core to the capsid. Interacts with core protein X; this interactions bridge the virus core to the capsid. Interacts with the endosome lysis protein VI; this interactions bridge the virus core to the capsid. Interacts with the peripentonal hexons. Interacts with host NPM1; this interaction might play a role in virus assembly. During virion entry, is ubiquitinated at the nuclear pore complex by host MIB1. This dissociates viral genomic DNA from capsid and allows genome delivery into nucleus for infection.

Its subcellular location is the virion. The protein resides in the host nucleus. It localises to the host nucleolus. In terms of biological role, associates loosely with the viral DNA to form an outer shell around the nucleoprotein-DNA complex and links it with the capsid by binding the endosome lysis protein. During entry, secures the viral genome in the capsid until it reaches the nuclear pore complex, preventing innate immunity responses. Dissociates from the viral genome at nuclear pore. Might be involved in nuclear capsid assembly of the viral particles through its association with NPM1/nucleophosmin. The sequence is that of Core-capsid bridging protein from Human adenovirus C serotype 5 (HAdV-5).